The primary structure comprises 436 residues: Magnesium transporter MRS2-B (436 aa).

2 stretches are compositionally biased toward low complexity: residues Met-1–Ala-14 and Val-29–Gly-54. The interval Met-1 to Leu-60 is disordered. Residues Leu-176–Asp-242 adopt a coiled-coil conformation. Transmembrane regions (helical) follow at residues Leu-372–Gly-392 and Trp-408–Phe-428. Residues Gly-392 to Asn-394 carry the Required for magnesium transport activity motif.

It belongs to the CorA metal ion transporter (MIT) (TC 1.A.35.5) family.

The protein resides in the membrane. Functionally, magnesium transporter that may mediate the influx of magnesium. The polypeptide is Magnesium transporter MRS2-B (MRS2-B) (Oryza sativa subsp. indica (Rice)).